Here is a 360-residue protein sequence, read N- to C-terminus: Arginase, non-hepatic 2 (360 aa).

Mn(2+) is bound by residues H122, D145, H147, and D149. Substrate-binding positions include H147–N151, S158–N160, and D204. Positions 253 and 255 each coordinate Mn(2+). Positions 267 and 298 each coordinate substrate.

This sequence belongs to the arginase family. Homotrimer. Requires Mn(2+) as cofactor. In terms of tissue distribution, expressed at differing tadpole stages in tail, intestine, hindlimb and trunk region. Strongest in tadpole tail.

The catalysed reaction is L-arginine + H2O = urea + L-ornithine. The protein operates within nitrogen metabolism; urea cycle; L-ornithine and urea from L-arginine: step 1/1. Its function is as follows. As well as its role in the urea cycle, may be involved in tissue remodeling. This chain is Arginase, non-hepatic 2 (arg2-b), found in Xenopus laevis (African clawed frog).